The primary structure comprises 194 residues: HTH-type transcriptional regulator BetI (194 aa).

Residues 8–68 (EIRRAQLIDA…ATMRHVLRDL (61 aa)) enclose the HTH tetR-type domain. The H-T-H motif DNA-binding region spans 31–50 (TLASVAQRANISTGIVSHYF).

It functions in the pathway amine and polyamine biosynthesis; betaine biosynthesis via choline pathway [regulation]. Its function is as follows. Repressor involved in the biosynthesis of the osmoprotectant glycine betaine. It represses transcription of the choline transporter BetT and the genes of BetAB involved in the synthesis of glycine betaine. This Burkholderia lata (strain ATCC 17760 / DSM 23089 / LMG 22485 / NCIMB 9086 / R18194 / 383) protein is HTH-type transcriptional regulator BetI.